The primary structure comprises 559 residues: 5'-AMP-activated protein kinase catalytic subunit alpha-1 (559 aa).

The Protein kinase domain maps to 27-279 (YILGDTLGVG…IKDIREHEWF (253 aa)). Thr32 is modified (phosphothreonine). ATP is bound by residues 33–41 (LGVGTFGKV) and Lys56. Catalysis depends on Asp150, which acts as the Proton acceptor. The residue at position 183 (Thr183) is a Phosphothreonine; by LKB1 and CaMKK2. A phosphothreonine mark is found at Thr269 and Thr355. Residues 302-381 (EALKEVCEKF…PERVPFLVAE (80 aa)) are AIS. At Ser356 the chain carries Phosphoserine. Ser360 carries the post-translational modification Phosphoserine; by ULK1. Thr368 is modified (phosphothreonine; by ULK1). Residue Thr382 is modified to Phosphothreonine. 3 positions are modified to phosphoserine: Ser397, Ser467, and Ser486. Residues 485–505 (KSGTATPQRSGSVSNYRSCQR) show a composition bias toward polar residues. The tract at residues 485–536 (KSGTATPQRSGSVSNYRSCQRSDSDAEAQGKSSEVSLTSSVTSLDSSPVDLT) is disordered. 2 positions are modified to phosphothreonine: Thr488 and Thr490. A phosphoserine mark is found at Ser496, Ser508, Ser524, and Ser527. A compositionally biased stretch (low complexity) spans 516-535 (SSEVSLTSSVTSLDSSPVDL).

Belongs to the protein kinase superfamily. CAMK Ser/Thr protein kinase family. SNF1 subfamily. As to quaternary structure, AMPK is a heterotrimer of an alpha catalytic subunit (PRKAA1 or PRKAA2), a beta (PRKAB1 or PRKAB2) and a gamma non-catalytic subunits (PRKAG1, PRKAG2 or PRKAG3). Interacts with FNIP1 and FNIP2. (Microbial infection) Interacts with Dengue type 2 virus non-structural protein 1; this interaction promotes the AMPK/ERK/mTOR signaling pathway to induce autophagy. It depends on Mg(2+) as a cofactor. Ubiquitinated. Post-translationally, phosphorylated at Thr-183 by STK11/LKB1 in complex with STE20-related adapter-alpha (STRADA) pseudo kinase and CAB39. Also phosphorylated at Thr-183 by CAMKK2; triggered by a rise in intracellular calcium ions, without detectable changes in the AMP/ATP ratio. CAMKK1 can also phosphorylate Thr-183, but at a much lower level. Dephosphorylated by protein phosphatase 2A and 2C (PP2A and PP2C). Phosphorylated by ULK1 and ULK2; leading to negatively regulate AMPK activity and suggesting the existence of a regulatory feedback loop between ULK1, ULK2 and AMPK. Dephosphorylated by PPM1A and PPM1B. In terms of processing, glycosylated; O-GlcNAcylated by OGT, promoting the AMP-activated protein kinase (AMPK) activity.

It localises to the cytoplasm. The protein resides in the nucleus. It catalyses the reaction L-seryl-[protein] + ATP = O-phospho-L-seryl-[protein] + ADP + H(+). It carries out the reaction L-threonyl-[protein] + ATP = O-phospho-L-threonyl-[protein] + ADP + H(+). The catalysed reaction is L-seryl-[acetyl-CoA carboxylase] + ATP = O-phospho-L-seryl-[acetyl-CoA carboxylase] + ADP + H(+). The enzyme catalyses L-seryl-[3-hydroxy-3-methylglutaryl-coenzyme A reductase] + ATP = O-phospho-L-seryl-[3-hydroxy-3-methylglutaryl-coenzyme A reductase] + ADP + H(+). It catalyses the reaction L-seryl-[tau protein] + ATP = O-phospho-L-seryl-[tau protein] + ADP + H(+). It carries out the reaction L-threonyl-[tau protein] + ATP = O-phospho-L-threonyl-[tau protein] + ADP + H(+). Its activity is regulated as follows. Activated by phosphorylation on Thr-183. Binding of AMP to non-catalytic gamma subunit (PRKAG1, PRKAG2 or PRKAG3) results in allosteric activation, inducing phosphorylation on Thr-183. AMP-binding to gamma subunit also sustains activity by preventing dephosphorylation of Thr-183. ADP also stimulates Thr-183 phosphorylation, without stimulating already phosphorylated AMPK. ATP promotes dephosphorylation of Thr-183, rendering the enzyme inactive. Under physiological conditions AMPK mainly exists in its inactive form in complex with ATP, which is much more abundant than AMP. AMPK is activated by antihyperglycemic drug metformin, a drug prescribed to patients with type 2 diabetes: in vivo, metformin seems to mainly inhibit liver gluconeogenesis. However, metformin can be used to activate AMPK in muscle and other cells in culture or ex vivo. Selectively inhibited by compound C (6-[4-(2-Piperidin-1-yl-ethoxy)-phenyl)]-3-pyridin-4-yl-pyyrazolo[1,5-a] pyrimidine. Activated by resveratrol, a natural polyphenol present in red wine, and S17834, a synthetic polyphenol. Functionally, catalytic subunit of AMP-activated protein kinase (AMPK), an energy sensor protein kinase that plays a key role in regulating cellular energy metabolism. In response to reduction of intracellular ATP levels, AMPK activates energy-producing pathways and inhibits energy-consuming processes: inhibits protein, carbohydrate and lipid biosynthesis, as well as cell growth and proliferation. AMPK acts via direct phosphorylation of metabolic enzymes, and by longer-term effects via phosphorylation of transcription regulators. Regulates lipid synthesis by phosphorylating and inactivating lipid metabolic enzymes such as ACACA, ACACB, GYS1, HMGCR and LIPE; regulates fatty acid and cholesterol synthesis by phosphorylating acetyl-CoA carboxylase (ACACA and ACACB) and hormone-sensitive lipase (LIPE) enzymes, respectively. Promotes lipolysis of lipid droplets by mediating phosphorylation of isoform 1 of CHKA (CHKalpha2). Regulates insulin-signaling and glycolysis by phosphorylating IRS1, PFKFB2 and PFKFB3. AMPK stimulates glucose uptake in muscle by increasing the translocation of the glucose transporter SLC2A4/GLUT4 to the plasma membrane, possibly by mediating phosphorylation of TBC1D4/AS160. Regulates transcription and chromatin structure by phosphorylating transcription regulators involved in energy metabolism such as CRTC2/TORC2, FOXO3, histone H2B, HDAC5, MEF2C, MLXIPL/ChREBP, EP300, HNF4A, p53/TP53, SREBF1, SREBF2 and PPARGC1A. Acts as a key regulator of glucose homeostasis in liver by phosphorylating CRTC2/TORC2, leading to CRTC2/TORC2 sequestration in the cytoplasm. In response to stress, phosphorylates 'Ser-36' of histone H2B (H2BS36ph), leading to promote transcription. Acts as a key regulator of cell growth and proliferation by phosphorylating FNIP1, TSC2, RPTOR, WDR24 and ATG1/ULK1: in response to nutrient limitation, negatively regulates the mTORC1 complex by phosphorylating RPTOR component of the mTORC1 complex and by phosphorylating and activating TSC2. Also phosphorylates and inhibits GATOR2 subunit WDR24 in response to nutrient limitation, leading to suppress glucose-mediated mTORC1 activation. In response to energetic stress, phosphorylates FNIP1, inactivating the non-canonical mTORC1 signaling, thereby promoting nuclear translocation of TFEB and TFE3, and inducing transcription of lysosomal or autophagy genes. In response to nutrient limitation, promotes autophagy by phosphorylating and activating ATG1/ULK1. In that process, it also activates WDR45/WIPI4. Phosphorylates CASP6, thereby preventing its autoprocessing and subsequent activation. In response to nutrient limitation, phosphorylates transcription factor FOXO3 promoting FOXO3 mitochondrial import. Also acts as a regulator of cellular polarity by remodeling the actin cytoskeleton; probably by indirectly activating myosin. AMPK also acts as a regulator of circadian rhythm by mediating phosphorylation of CRY1, leading to destabilize it. May regulate the Wnt signaling pathway by phosphorylating CTNNB1, leading to stabilize it. Also has tau-protein kinase activity: in response to amyloid beta A4 protein (APP) exposure, activated by CAMKK2, leading to phosphorylation of MAPT/TAU; however the relevance of such data remains unclear in vivo. Also phosphorylates CFTR, EEF2K, KLC1, NOS3 and SLC12A1. Regulates hepatic lipogenesis. Activated via SIRT3, represses sterol regulatory element-binding protein (SREBP) transcriptional activities and ATP-consuming lipogenesis to restore cellular energy balance. Upon stress, regulates mitochondrial fragmentation through phosphorylation of MTFR1L. The polypeptide is 5'-AMP-activated protein kinase catalytic subunit alpha-1 (Homo sapiens (Human)).